The sequence spans 260 residues: Caveolae-associated protein 3 (260 aa).

An interaction with CAVIN1 region spans residues M1–K84. A leucine-zipper region spans residues V20–L78. S62 and S70 each carry phosphoserine. Residue K128 forms a Glycyl lysine isopeptide (Lys-Gly) (interchain with G-Cter in SUMO2) linkage. The interaction with CAV1 stretch occupies residues A135 to T201. The segment at K140–A260 is disordered. Acidic residues predominate over residues A157–P168. S162, S163, and S171 each carry phosphoserine. Positions T201–L210 are enriched in pro residues.

It belongs to the CAVIN family. As to quaternary structure, component of the CAVIN complex composed of CAVIN1, CAVIN2, CAVIN3 and CAVIN4. Interacts with PRKCD and with phosphatidylserine. Phosphatidylserine may form a bridge between PKC and PKC-binding partners and stabilize the binding. Interacts with PER2. Interacts with CAVIN1 and EPS15L1. Interacts (via leucine-zipper domain) with CAV1 in a cholesterol-sensitive manner. Post-translationally, in vitro, phosphorylated by PRKCD.

The protein localises to the cytoplasm. The protein resides in the membrane. It is found in the caveola. It localises to the cytosol. Functionally, regulates the traffic and/or budding of caveolae. Plays a role in caveola formation in a tissue-specific manner. Required for the formation of caveolae in smooth muscle but not in the lung and heart endothelial cells. Regulates the equilibrium between cell surface-associated and cell surface-dissociated caveolae by promoting the rapid release of caveolae from the cell surface. Plays a role in the regulation of the circadian clock. Modulates the period length and phase of circadian gene expression and also regulates expression and interaction of the core clock components PER1/2 and CRY1/2. The chain is Caveolae-associated protein 3 (CAVIN3) from Bos taurus (Bovine).